The following is a 156-amino-acid chain: MFSSVGWGEIFLLVVVGLVVIGPERLPRLIQDARAALLAARTAIDNAKQSLDSDFGSEFDEIRKPLTQVAQYSRMSPKTAITKALFDNDSSFLDDFDPKKIMAEGTEGEAQRNKQAADNNANVVERPADGSTARPTQNDPKDGPNYSGGVSWTDII.

A helical transmembrane segment spans residues F2–G22. The disordered stretch occupies residues K100 to I156. The segment covering N113 to N122 has biased composition (polar residues).

It belongs to the TatB family. In terms of assembly, the Tat system comprises two distinct complexes: a TatABC complex, containing multiple copies of TatA, TatB and TatC subunits, and a separate TatA complex, containing only TatA subunits. Substrates initially bind to the TatABC complex, which probably triggers association of the separate TatA complex to form the active translocon.

It is found in the cell membrane. In terms of biological role, part of the twin-arginine translocation (Tat) system that transports large folded proteins containing a characteristic twin-arginine motif in their signal peptide across membranes. Together with TatC, TatB is part of a receptor directly interacting with Tat signal peptides. TatB may form an oligomeric binding site that transiently accommodates folded Tat precursor proteins before their translocation. The polypeptide is Sec-independent protein translocase protein TatB (Corynebacterium glutamicum (strain ATCC 13032 / DSM 20300 / JCM 1318 / BCRC 11384 / CCUG 27702 / LMG 3730 / NBRC 12168 / NCIMB 10025 / NRRL B-2784 / 534)).